Consider the following 376-residue polypeptide: Chaperone protein DnaJ (376 aa).

Residues 5-70 (DYYEILGVSK…QKRAAYDQYG (66 aa)) form the J domain. The CR-type zinc finger occupies 131–209 (GVTKEIRIPT…CHGHGRVERS (79 aa)). Residues Cys144, Cys147, Cys161, Cys164, Cys183, Cys186, Cys197, and Cys200 each coordinate Zn(2+). 4 CXXCXGXG motif repeats span residues 144–151 (CDVCHGSG), 161–168 (CPTCHGSG), 183–190 (CPHCQGRG), and 197–204 (CNKCHGHG).

Belongs to the DnaJ family. As to quaternary structure, homodimer. Zn(2+) is required as a cofactor.

The protein localises to the cytoplasm. In terms of biological role, participates actively in the response to hyperosmotic and heat shock by preventing the aggregation of stress-denatured proteins and by disaggregating proteins, also in an autonomous, DnaK-independent fashion. Unfolded proteins bind initially to DnaJ; upon interaction with the DnaJ-bound protein, DnaK hydrolyzes its bound ATP, resulting in the formation of a stable complex. GrpE releases ADP from DnaK; ATP binding to DnaK triggers the release of the substrate protein, thus completing the reaction cycle. Several rounds of ATP-dependent interactions between DnaJ, DnaK and GrpE are required for fully efficient folding. Also involved, together with DnaK and GrpE, in the DNA replication of plasmids through activation of initiation proteins. This is Chaperone protein DnaJ from Escherichia fergusonii (strain ATCC 35469 / DSM 13698 / CCUG 18766 / IAM 14443 / JCM 21226 / LMG 7866 / NBRC 102419 / NCTC 12128 / CDC 0568-73).